Here is a 311-residue protein sequence, read N- to C-terminus: Ribosomal RNA small subunit methyltransferase H 1 (311 aa).

S-adenosyl-L-methionine contacts are provided by residues 33 to 35 (AGH), D53, F80, D101, and Q108.

This sequence belongs to the methyltransferase superfamily. RsmH family.

The protein resides in the cytoplasm. The enzyme catalyses cytidine(1402) in 16S rRNA + S-adenosyl-L-methionine = N(4)-methylcytidine(1402) in 16S rRNA + S-adenosyl-L-homocysteine + H(+). Its function is as follows. Specifically methylates the N4 position of cytidine in position 1402 (C1402) of 16S rRNA. The protein is Ribosomal RNA small subunit methyltransferase H 1 of Alkaliphilus metalliredigens (strain QYMF).